A 179-amino-acid polypeptide reads, in one-letter code: Cytochrome b6-f complex iron-sulfur subunit (179 aa).

The helical transmembrane segment at 21-43 (LLTFGSATGVALGMLYPVVRYFI) threads the bilayer. In terms of domain architecture, Rieske spans 61-162 (GNDISVSDFL…AAVSDDKITF (102 aa)). Residues Cys-108, His-110, Cys-126, and His-129 each coordinate [2Fe-2S] cluster. Cys-113 and Cys-128 are joined by a disulfide.

It belongs to the Rieske iron-sulfur protein family. As to quaternary structure, the 4 large subunits of the cytochrome b6-f complex are cytochrome b6, subunit IV (17 kDa polypeptide, PetD), cytochrome f and the Rieske protein, while the 4 small subunits are PetG, PetL, PetM and PetN. The complex functions as a dimer. [2Fe-2S] cluster is required as a cofactor.

The protein resides in the cellular thylakoid membrane. The catalysed reaction is 2 oxidized [plastocyanin] + a plastoquinol + 2 H(+)(in) = 2 reduced [plastocyanin] + a plastoquinone + 4 H(+)(out). Its function is as follows. Component of the cytochrome b6-f complex, which mediates electron transfer between photosystem II (PSII) and photosystem I (PSI), cyclic electron flow around PSI, and state transitions. This is Cytochrome b6-f complex iron-sulfur subunit from Cyanothece sp. (strain PCC 7425 / ATCC 29141).